The primary structure comprises 507 residues: ATP synthase subunit alpha, plastid (507 aa).

170–177 (GDRQTGKT) contributes to the ATP binding site.

This sequence belongs to the ATPase alpha/beta chains family. As to quaternary structure, F-type ATPases have 2 components, CF(1) - the catalytic core - and CF(0) - the membrane proton channel. CF(1) has five subunits: alpha(3), beta(3), gamma(1), delta(1), epsilon(1). CF(0) has four main subunits: a, b, b' and c.

It is found in the plastid membrane. It catalyses the reaction ATP + H2O + 4 H(+)(in) = ADP + phosphate + 5 H(+)(out). Produces ATP from ADP in the presence of a proton gradient across the membrane. The alpha chain is a regulatory subunit. This is ATP synthase subunit alpha, plastid from Cuscuta gronovii (Common dodder).